Reading from the N-terminus, the 353-residue chain is Quinolinate synthase (353 aa).

Positions 47 and 68 each coordinate iminosuccinate. C113 serves as a coordination point for [4Fe-4S] cluster. Iminosuccinate-binding positions include 139-141 (YAN) and S156. C200 is a binding site for [4Fe-4S] cluster. Residues 226-228 (HPE) and T243 each bind iminosuccinate. C297 serves as a coordination point for [4Fe-4S] cluster.

Belongs to the quinolinate synthase family. Type 1 subfamily. [4Fe-4S] cluster serves as cofactor.

It localises to the cytoplasm. The enzyme catalyses iminosuccinate + dihydroxyacetone phosphate = quinolinate + phosphate + 2 H2O + H(+). Its pathway is cofactor biosynthesis; NAD(+) biosynthesis; quinolinate from iminoaspartate: step 1/1. In terms of biological role, catalyzes the condensation of iminoaspartate with dihydroxyacetone phosphate to form quinolinate. The sequence is that of Quinolinate synthase from Yersinia pseudotuberculosis serotype O:3 (strain YPIII).